We begin with the raw amino-acid sequence, 78 residues long: Probable [Fe-S]-dependent transcriptional repressor (78 aa).

Residues Cys56, Cys61, Cys64, and Cys70 each coordinate iron-sulfur cluster.

It belongs to the FeoC family.

In terms of biological role, may function as a transcriptional regulator that controls feoABC expression. The polypeptide is Probable [Fe-S]-dependent transcriptional repressor (Salmonella heidelberg (strain SL476)).